Reading from the N-terminus, the 286-residue chain is MEFKISGYTRLVGLLGYPVRHSLSPLMHNMAFQHLGLDYVYLVFEVKEDNLKEAVDAMKTLDVAGFNVTMPNKQKIIPLLDEISEEARLIGSVNTVVNKNGHLKGYNTDGKGYVMGLADEGISPEGKTIVIAGAGGASKSVAIQLALEGAKEITILNRTVEAAEEICNIINKNIPTCKTSATGYEDNELKQQLKEADLFINCTNLGMGSHEEKSIISSTDILHPDLIVSDVVYAPPKTKLLHMAEEVGCKTINGLGMIIGQGALAFKLWTGEDMPIEYIKRIILSK.

Residues 22–24 and threonine 69 contribute to the shikimate site; that span reads SLS. Lysine 73 serves as the catalytic Proton acceptor. Glutamate 85 contributes to the NADP(+) binding site. Shikimate-binding residues include asparagine 94 and aspartate 109. Residues 133–137 and valine 231 each bind NADP(+); that span reads GAGGA. Tyrosine 233 lines the shikimate pocket. Glycine 254 is an NADP(+) binding site.

The protein belongs to the shikimate dehydrogenase family. Homodimer.

It carries out the reaction shikimate + NADP(+) = 3-dehydroshikimate + NADPH + H(+). The protein operates within metabolic intermediate biosynthesis; chorismate biosynthesis; chorismate from D-erythrose 4-phosphate and phosphoenolpyruvate: step 4/7. Functionally, involved in the biosynthesis of the chorismate, which leads to the biosynthesis of aromatic amino acids. Catalyzes the reversible NADPH linked reduction of 3-dehydroshikimate (DHSA) to yield shikimate (SA). The chain is Shikimate dehydrogenase (NADP(+)) from Alkaliphilus metalliredigens (strain QYMF).